The following is a 122-amino-acid chain: Large ribosomal subunit protein uL14 (122 aa).

Belongs to the universal ribosomal protein uL14 family. In terms of assembly, part of the 50S ribosomal subunit. Forms a cluster with proteins L3 and L19. In the 70S ribosome, L14 and L19 interact and together make contacts with the 16S rRNA in bridges B5 and B8.

Functionally, binds to 23S rRNA. Forms part of two intersubunit bridges in the 70S ribosome. The chain is Large ribosomal subunit protein uL14 from Bartonella bacilliformis (strain ATCC 35685 / KC583 / Herrer 020/F12,63).